The following is a 337-amino-acid chain: Quinolinate synthase (337 aa).

2 residues coordinate iminosuccinate: histidine 40 and serine 57. Cysteine 102 contacts [4Fe-4S] cluster. Iminosuccinate is bound by residues tyrosine 128–asparagine 130 and serine 145. Cysteine 189 provides a ligand contact to [4Fe-4S] cluster. Residues histidine 215 to glutamate 217 and threonine 243 each bind iminosuccinate. Cysteine 288 contacts [4Fe-4S] cluster.

The protein belongs to the quinolinate synthase family. Type 2 subfamily. [4Fe-4S] cluster serves as cofactor.

It localises to the cytoplasm. It catalyses the reaction iminosuccinate + dihydroxyacetone phosphate = quinolinate + phosphate + 2 H2O + H(+). It functions in the pathway cofactor biosynthesis; NAD(+) biosynthesis; quinolinate from iminoaspartate: step 1/1. In terms of biological role, catalyzes the condensation of iminoaspartate with dihydroxyacetone phosphate to form quinolinate. The protein is Quinolinate synthase of Mycobacterium sp. (strain JLS).